The primary structure comprises 418 residues: Imidazolonepropionase (418 aa).

Fe(3+) is bound by residues His-80 and His-82. Positions 80 and 82 each coordinate Zn(2+). 4-imidazolone-5-propanoate contacts are provided by Arg-89, Tyr-152, and His-185. Tyr-152 serves as a coordination point for N-formimidoyl-L-glutamate. His-250 contacts Fe(3+). His-250 serves as a coordination point for Zn(2+). Gln-253 is a binding site for 4-imidazolone-5-propanoate. Asp-325 contacts Fe(3+). Asp-325 provides a ligand contact to Zn(2+). Residues Asn-327 and Gly-329 each coordinate N-formimidoyl-L-glutamate. Ser-330 is a binding site for 4-imidazolone-5-propanoate.

This sequence belongs to the metallo-dependent hydrolases superfamily. HutI family. It depends on Zn(2+) as a cofactor. The cofactor is Fe(3+).

Its subcellular location is the cytoplasm. It catalyses the reaction 4-imidazolone-5-propanoate + H2O = N-formimidoyl-L-glutamate. The protein operates within amino-acid degradation; L-histidine degradation into L-glutamate; N-formimidoyl-L-glutamate from L-histidine: step 3/3. In terms of biological role, catalyzes the hydrolytic cleavage of the carbon-nitrogen bond in imidazolone-5-propanoate to yield N-formimidoyl-L-glutamate. It is the third step in the universal histidine degradation pathway. This chain is Imidazolonepropionase, found in Solibacter usitatus (strain Ellin6076).